Here is a 376-residue protein sequence, read N- to C-terminus: Protein RecA (376 aa).

79–86 (GPESSGKT) provides a ligand contact to ATP. The disordered stretch occupies residues 357–376 (AAARAATDKPVETKGANAAA).

This sequence belongs to the RecA family.

The protein localises to the cytoplasm. Functionally, can catalyze the hydrolysis of ATP in the presence of single-stranded DNA, the ATP-dependent uptake of single-stranded DNA by duplex DNA, and the ATP-dependent hybridization of homologous single-stranded DNAs. It interacts with LexA causing its activation and leading to its autocatalytic cleavage. This Synechococcus sp. (strain CC9902) protein is Protein RecA.